Reading from the N-terminus, the 137-residue chain is Fatty acid-binding protein homolog 8 (137 aa).

Positions 24–34 (KEIGVGLLIRK) match the Nuclear localization signal motif.

This sequence belongs to the calycin superfamily. Fatty-acid binding protein (FABP) family. In terms of assembly, monomer. In terms of tissue distribution, intestine.

The protein resides in the lysosome. It localises to the nucleus. Lysosomal lipid chaperone which binds to a wide range of unsaturated fatty acids, including high affinity binding to oleic acid and oleoylethanolamide, to transport them into the nucleus. As part of a lysosome-to-nucleus retrograde lipid signaling pathway, translocates into the nucleus where it activates the transcription of genes promoting longevity and activation of mitochondrial beta oxidation. This chain is Fatty acid-binding protein homolog 8, found in Caenorhabditis elegans.